Reading from the N-terminus, the 281-residue chain is Probable endonuclease 4 (281 aa).

Residues His-78, His-118, Glu-149, Asp-181, His-184, His-216, Asp-229, His-231, and Glu-260 each contribute to the Zn(2+) site.

It belongs to the AP endonuclease 2 family. The cofactor is Zn(2+).

It carries out the reaction Endonucleolytic cleavage to 5'-phosphooligonucleotide end-products.. In terms of biological role, endonuclease IV plays a role in DNA repair. It cleaves phosphodiester bonds at apurinic or apyrimidinic (AP) sites, generating a 3'-hydroxyl group and a 5'-terminal sugar phosphate. The protein is Probable endonuclease 4 of Thermoplasma acidophilum (strain ATCC 25905 / DSM 1728 / JCM 9062 / NBRC 15155 / AMRC-C165).